The primary structure comprises 245 residues: AA9 family lytic polysaccharide monooxygenase B (245 aa).

Positions 1-18 (MKSAIFAAAVLGAAGVSA) are cleaved as a signal peptide. Residues H19 and H105 each coordinate Cu(2+). C116 and C120 are oxidised to a cystine. The O2 site is built by H179 and Q188. Cu(2+) is bound at residue Y190.

The protein belongs to the polysaccharide monooxygenase AA9 family. It depends on Cu(2+) as a cofactor.

It is found in the secreted. It catalyses the reaction [(1-&gt;4)-beta-D-glucosyl]n+m + reduced acceptor + O2 = 4-dehydro-beta-D-glucosyl-[(1-&gt;4)-beta-D-glucosyl]n-1 + [(1-&gt;4)-beta-D-glucosyl]m + acceptor + H2O.. In terms of biological role, lytic polysaccharide monooxygenase (LPMO) that depolymerizes crystalline and amorphous polysaccharides via the oxidation of scissile alpha- or beta-(1-4)-glycosidic bonds, yielding C1 or C4 oxidation products. Catalysis by LPMOs requires the reduction of the active-site copper from Cu(II) to Cu(I) by a reducing agent and H(2)O(2) or O(2) as a cosubstrate. Active on hemicelluloses, including xylan, glucomannan, and xyloglucan. Has no activity on ivory nut mannan (INM), a linear beta-1,4-linked mannan without substitutions. The chain is AA9 family lytic polysaccharide monooxygenase B from Malbranchea cinnamomea (Thermophilic fungus).